The following is a 919-amino-acid chain: Probable dipeptidyl-aminopeptidase B (919 aa).

Residues 1–10 (MRRSDGHEET) show a composition bias toward basic and acidic residues. Residues 1 to 53 (MRRSDGHEETSEFLPMTHSRSVSAASQTSTDSSLSTESLFPREQKPFPNAMGG) are disordered. At 1 to 92 (MRRSDGHEET…AATGGGRARR (92 aa)) the chain is on the cytoplasmic side. The span at 21–38 (SVSAASQTSTDSSLSTES) shows a compositional bias: low complexity. Residues 93-113 (IFWILVLLCLGGWLLAFVLFL) form a helical; Signal-anchor for type II membrane protein membrane-spanning segment. Over 114–919 (TGGRANYQTA…MKRSLRLLSP (806 aa)) the chain is Vacuolar. 3 N-linked (GlcNAc...) asparagine glycosylation sites follow: Asn200, Asn352, and Asn643. Ser757 functions as the Charge relay system in the catalytic mechanism. The N-linked (GlcNAc...) asparagine glycan is linked to Asn811. Catalysis depends on charge relay system residues Asp834 and His867.

This sequence belongs to the peptidase S9B family.

Its subcellular location is the vacuole membrane. It catalyses the reaction Release of an N-terminal dipeptide, Xaa-Yaa-|-Zaa-, from a polypeptide, preferentially when Yaa is Pro, provided Zaa is neither Pro nor hydroxyproline.. In terms of biological role, type IV dipeptidyl-peptidase which removes N-terminal dipeptides sequentially from polypeptides having unsubstituted N-termini provided that the penultimate residue is proline. The polypeptide is Probable dipeptidyl-aminopeptidase B (dapB) (Aspergillus fumigatus (strain CBS 144.89 / FGSC A1163 / CEA10) (Neosartorya fumigata)).